Reading from the N-terminus, the 101-residue chain is Urease subunit beta (101 aa).

It belongs to the urease beta subunit family. As to quaternary structure, heterotrimer of UreA (gamma), UreB (beta) and UreC (alpha) subunits. Three heterotrimers associate to form the active enzyme.

The protein resides in the cytoplasm. It catalyses the reaction urea + 2 H2O + H(+) = hydrogencarbonate + 2 NH4(+). The protein operates within nitrogen metabolism; urea degradation; CO(2) and NH(3) from urea (urease route): step 1/1. This Verminephrobacter eiseniae (strain EF01-2) protein is Urease subunit beta.